Reading from the N-terminus, the 583-residue chain is MMSRLNSVVIKLWLTIILIVTTVLILLSIALITFMQYYFTQETENAIREDARRISSLVEQSHNKEEAIKYSQTLIENPGGLMIINNKHRQSTASLSNIKKQMLNEVVNNDHFDDVFDKGKSVTRNVTIKEKGSSQTYILLGYPTKAQKNSHSKYSGVFIYKDLKSIEDTNNAITIITIITAVIFLTITTVFAFFLSSRITKPLRRLRDQATRVSEGDYSYKPSVTTKDEIGQLSQAFNQMSTEIEEHVDALSTSKNIRDSLINSMVEGVLGINESRQIILSNKMANDIMDNIDEDAKAFLLRQIEDTFKSKQTEMRDLEMNTRFFVVTTSYIDKIEQGGKSGVVVTVRDMTNEHNLDQMKKDFIANVSHELRTPISLLQGYTESIVDGIVTEPDEIKESLAIVLDESKRLNRLVNELLNVARMDAEGLSVNKEVQPIAALLDKMKIKYRQQADDLGLNMTFNYCKKRVWSYDMDRMDQVLTNLIDNASRYTKPGDEIAITCDENESEDILYIKDTGTGIAPEHLQQVFDRFYKVDAARTRGKQGTGLGLFICKMIIEEHGGSIDVKSELGKGTTFIIKLPKPE.

Residues 1–11 (MMSRLNSVVIK) are Cytoplasmic-facing. A helical membrane pass occupies residues 12 to 32 (LWLTIILIVTTVLILLSIALI). Residues 33 to 174 (TFMQYYFTQE…SIEDTNNAIT (142 aa)) are Extracellular-facing. The helical transmembrane segment at 175–195 (IITIITAVIFLTITTVFAFFL) threads the bilayer. The Cytoplasmic segment spans residues 196 to 583 (SSRITKPLRR…TFIIKLPKPE (388 aa)). One can recognise an HAMP domain in the interval 197–249 (SRITKPLRRLRDQATRVSEGDYSYKPSVTTKDEIGQLSQAFNQMSTEIEEHVD). The region spanning 366–583 (NVSHELRTPI…TFIIKLPKPE (218 aa)) is the Histidine kinase domain. Position 369 is a phosphohistidine; by autocatalysis (H369).

The protein localises to the cell membrane. It catalyses the reaction ATP + protein L-histidine = ADP + protein N-phospho-L-histidine.. Its function is as follows. Member of the two-component regulatory system SrrA/SrrB, which is involved in the global regulation of staphylococcal virulence factors in response to environmental oxygen levels as well as biofilm formation. Also plays an essential role in host-derived nitric oxide resistance by regulating hmp/flavohemoglobin, an enzyme that detoxifies nitric oxide by converting it to nitrate. Functions as a sensor protein kinase which is autophosphorylated at a histidine residue and transfers its phosphate group to SrrA. In turn, SrrA binds to the upstream promoter regions of the target genes to positively and negatively regulate their expression. The protein is Sensor protein SrrB (srrB) of Staphylococcus aureus.